The sequence spans 167 residues: Transcriptional repressor NrdR (167 aa).

A zinc finger spans residues 3–34; the sequence is CPFCRNPDSRVVDSRMADDGSAIRRRRQCPEC. Residues 46–136 form the ATP-cone domain; the sequence is LSVIKRSGVG…VYQAFESLED (91 aa). Residues 148–167 are disordered; that stretch reads AQEDAAERPATPRKPEKTSL.

This sequence belongs to the NrdR family. Zn(2+) is required as a cofactor.

Its function is as follows. Negatively regulates transcription of bacterial ribonucleotide reductase nrd genes and operons by binding to NrdR-boxes. The polypeptide is Transcriptional repressor NrdR (Pseudarthrobacter chlorophenolicus (strain ATCC 700700 / DSM 12829 / CIP 107037 / JCM 12360 / KCTC 9906 / NCIMB 13794 / A6) (Arthrobacter chlorophenolicus)).